The following is a 212-amino-acid chain: MSLFDKKHLVSPADALPGRNTPMPVATLHAVNGHSMTNVPDGMEIAIFAMGCFWGVERLFWQLHGVYSTAAGYTGGYTPNPTYREVCSGDTGHAEAVRIVYDPSVISYEQLLQVFWENHDPAQGMRQGNDHGTQYRSAIYPLTPEQDAAARASLERFQAAMLAADDDRRITTEIANATPFYYAEDDHQQYLHKNPYGYCGIGGIGVCLPPEA.

Cys-52 is a catalytic residue.

It belongs to the MsrA Met sulfoxide reductase family.

The enzyme catalyses L-methionyl-[protein] + [thioredoxin]-disulfide + H2O = L-methionyl-(S)-S-oxide-[protein] + [thioredoxin]-dithiol. It catalyses the reaction [thioredoxin]-disulfide + L-methionine + H2O = L-methionine (S)-S-oxide + [thioredoxin]-dithiol. In terms of biological role, has an important function as a repair enzyme for proteins that have been inactivated by oxidation. Catalyzes the reversible oxidation-reduction of methionine sulfoxide in proteins to methionine. The protein is Peptide methionine sulfoxide reductase MsrA of Escherichia coli O127:H6 (strain E2348/69 / EPEC).